Consider the following 181-residue polypeptide: Nucleoside-triphosphatase THEP1 (181 aa).

ATP-binding positions include 12–19 (GPVGSIKS) and 104–111 (VIVIDEIG).

It belongs to the THEP1 NTPase family.

It carries out the reaction a ribonucleoside 5'-triphosphate + H2O = a ribonucleoside 5'-diphosphate + phosphate + H(+). Its function is as follows. Has nucleotide phosphatase activity towards ATP, GTP, CTP, TTP and UTP. May hydrolyze nucleoside diphosphates with lower efficiency. The polypeptide is Nucleoside-triphosphatase THEP1 (Thermoplasma acidophilum (strain ATCC 25905 / DSM 1728 / JCM 9062 / NBRC 15155 / AMRC-C165)).